We begin with the raw amino-acid sequence, 95 residues long: Aspartyl/glutamyl-tRNA(Asn/Gln) amidotransferase subunit C (95 aa).

This sequence belongs to the GatC family. As to quaternary structure, heterotrimer of A, B and C subunits.

It carries out the reaction L-glutamyl-tRNA(Gln) + L-glutamine + ATP + H2O = L-glutaminyl-tRNA(Gln) + L-glutamate + ADP + phosphate + H(+). It catalyses the reaction L-aspartyl-tRNA(Asn) + L-glutamine + ATP + H2O = L-asparaginyl-tRNA(Asn) + L-glutamate + ADP + phosphate + 2 H(+). Functionally, allows the formation of correctly charged Asn-tRNA(Asn) or Gln-tRNA(Gln) through the transamidation of misacylated Asp-tRNA(Asn) or Glu-tRNA(Gln) in organisms which lack either or both of asparaginyl-tRNA or glutaminyl-tRNA synthetases. The reaction takes place in the presence of glutamine and ATP through an activated phospho-Asp-tRNA(Asn) or phospho-Glu-tRNA(Gln). This is Aspartyl/glutamyl-tRNA(Asn/Gln) amidotransferase subunit C from Syntrophus aciditrophicus (strain SB).